The chain runs to 511 residues: Apolipoprotein N-acyltransferase (511 aa).

6 helical membrane passes run Pro-7–Phe-29, Gly-58–His-78, Leu-90–Trp-110, Leu-125–Phe-145, Val-163–Val-183, and Gly-192–Leu-212. In terms of domain architecture, CN hydrolase spans Ile-230–Pro-470. Glu-269 functions as the Proton acceptor in the catalytic mechanism. Lys-330 is an active-site residue. The Nucleophile role is filled by Cys-382. The helical transmembrane segment at Val-482 to Leu-502 threads the bilayer.

It belongs to the CN hydrolase family. Apolipoprotein N-acyltransferase subfamily.

Its subcellular location is the cell inner membrane. It catalyses the reaction N-terminal S-1,2-diacyl-sn-glyceryl-L-cysteinyl-[lipoprotein] + a glycerophospholipid = N-acyl-S-1,2-diacyl-sn-glyceryl-L-cysteinyl-[lipoprotein] + a 2-acyl-sn-glycero-3-phospholipid + H(+). It functions in the pathway protein modification; lipoprotein biosynthesis (N-acyl transfer). In terms of biological role, catalyzes the phospholipid dependent N-acylation of the N-terminal cysteine of apolipoprotein, the last step in lipoprotein maturation. This chain is Apolipoprotein N-acyltransferase, found in Pseudomonas aeruginosa (strain ATCC 15692 / DSM 22644 / CIP 104116 / JCM 14847 / LMG 12228 / 1C / PRS 101 / PAO1).